The sequence spans 318 residues: Olfactory receptor 56A1 (318 aa).

The Extracellular portion of the chain corresponds to 1-32 (MIQPMASPSNSSTVPVSEFLLICFPNFQSWQH). An N-linked (GlcNAc...) asparagine glycan is attached at asparagine 10. The helical transmembrane segment at 33–53 (WLSLPLSLLFLLAMGANTTLL) threads the bilayer. The Cytoplasmic segment spans residues 54-61 (ITIQLEAS). The helical transmembrane segment at 62–82 (LHQPLYYLLSLLSLLDIVLCL) threads the bilayer. Topologically, residues 83-106 (TVIPKVLAIFWYDLRSISFPACFL) are extracellular. Cysteine 104 and cysteine 196 are oxidised to a cystine. The helical transmembrane segment at 107–127 (QMFIMNSFLPMESCTFMVMAY) threads the bilayer. Residues 128-146 (DRYVAICHPLRYPSIITNQ) are Cytoplasmic-facing. Residues 147 to 167 (FVAKASVFIVVRNALLTAPIP) form a helical membrane-spanning segment. At 168–203 (ILTSLLHYCGENVIENCICANLSVSRLSCDNFTLNR) the chain is on the extracellular side. 2 N-linked (GlcNAc...) asparagine glycosylation sites follow: asparagine 188 and asparagine 198. Residues 204 to 224 (IYQFVAGWTLLGSDLFLIFLS) form a helical membrane-spanning segment. At 225–244 (YTFILRAVLRFKAEGAAVKA) the chain is on the cytoplasmic side. A helical membrane pass occupies residues 245–265 (LSTCGSHFILILFFSTILLVV). The Extracellular portion of the chain corresponds to 266–280 (VLTNVARKKVPMDIL). Residues 281–301 (ILLNVLHHLIPPALNPIVYGV) form a helical membrane-spanning segment. Over 302 to 318 (RTKEIKQGIQKLLQRGR) the chain is Cytoplasmic.

The protein belongs to the G-protein coupled receptor 1 family.

It localises to the cell membrane. In terms of biological role, odorant receptor. This is Olfactory receptor 56A1 (OR56A1) from Homo sapiens (Human).